Reading from the N-terminus, the 253-residue chain is Low affinity immunoglobulin gamma Fc region receptor III-A (253 aa).

The N-terminal stretch at 1–20 (MGQPLPPVALLLLVSASSRA) is a signal peptide. The Extracellular portion of the chain corresponds to 21–207 (ADVPKALVLL…ISSSVLPWHQ (187 aa)). Ig-like C2-type domains follow at residues 24-90 (PKAL…YRCQ) and 99-189 (PVQL…VTIT). Disulfide bonds link Cys-47-Cys-89 and Cys-128-Cys-172. Asn-56, Asn-63, Asn-165, and Asn-180 each carry an N-linked (GlcNAc...) asparagine glycan. Residues 208–226 (IAFCLVMGLLLAADTGLYF) traverse the membrane as a helical segment. Topologically, residues 227 to 253 (SVQRDLRSSQRARKEHTLGWSLGSQDK) are cytoplasmic.

In terms of assembly, forms a heterooligomeric complex with ITAM-containing signaling subunits FCER1G. Interacts (via transmembrane domain) with signaling subunits; this interaction is a prerequisite for receptor complex expression on the cell surface and intracellular signal transduction. Binds the Fc region of antigen-complexed IgG.

It localises to the cell membrane. Its function is as follows. Receptor for the invariable Fc fragment of immunoglobulin gamma (IgG). Optimally activated upon binding of clustered antigen-IgG complexes displayed on cell surfaces, triggers lysis of antibody-coated cells, a process known as antibody-dependent cellular cytotoxicity (ADCC). Does not bind free monomeric IgG, thus avoiding inappropriate effector cell activation in the absence of antigenic trigger. Mediates IgG effector functions on natural killer (NK) cells. Binds antigen-IgG complexes generated upon infection and triggers NK cell-dependent cytokine production and degranulation to limit viral load and propagation. Fc-binding subunit that associates with FCER1G adapter to form functional signaling complexes. Following the engagement of antigen-IgG complexes, triggers phosphorylation of immunoreceptor tyrosine-based activation motif (ITAM)-containing adapters with subsequent activation of phosphatidylinositol 3-kinase signaling and sustained elevation of intracellular calcium that ultimately drive NK cell activation. Mediates enhanced ADCC in response to afucosylated IgGs. In Oryctolagus cuniculus (Rabbit), this protein is Low affinity immunoglobulin gamma Fc region receptor III-A.